Reading from the N-terminus, the 631-residue chain is Phosphomethylpyrimidine synthase (631 aa).

Substrate-binding positions include N239, M268, Y297, H333, 353 to 355 (SRG), 394 to 397 (DGLR), and E433. Residue H437 coordinates Zn(2+). Y460 is a substrate binding site. Residue H501 coordinates Zn(2+). [4Fe-4S] cluster-binding residues include C581, C584, and C589.

The protein belongs to the ThiC family. As to quaternary structure, homodimer. [4Fe-4S] cluster is required as a cofactor.

The enzyme catalyses 5-amino-1-(5-phospho-beta-D-ribosyl)imidazole + S-adenosyl-L-methionine = 4-amino-2-methyl-5-(phosphooxymethyl)pyrimidine + CO + 5'-deoxyadenosine + formate + L-methionine + 3 H(+). It participates in cofactor biosynthesis; thiamine diphosphate biosynthesis. Its function is as follows. Catalyzes the synthesis of the hydroxymethylpyrimidine phosphate (HMP-P) moiety of thiamine from aminoimidazole ribotide (AIR) in a radical S-adenosyl-L-methionine (SAM)-dependent reaction. The polypeptide is Phosphomethylpyrimidine synthase (Shigella boydii serotype 4 (strain Sb227)).